The following is a 296-amino-acid chain: MYLQLLKSLNRVHPRAWDFIQLSRMDRPIGIYLLLWPTLTAVWIAGLGSPTLANVLIFGLGVVLMRAAGCCINDFADRKVDGHVKRTADRPLASGRVKPREALALFGILVAVSFLLVLCTNSKTVWLSFGAVALAFCYPFMKRYTYYPQVVLGAAYSWGIPMAFTAAGGELPASAWLLYIANLLWTVGYDTYYAMVDRDDDLKIGVKSTAILFGESDRMIILTLQMLSLGCLLLAGSRFELGGWFHLGLLGAALCFAWEYWSTRKLDRESCFKAFLHNHWAGLLVFMGVVLDYALR.

8 helical membrane-spanning segments follow: residues 28–48 (PIGI…AGLG), 52–72 (LANV…GCCI), 102–122 (ALAL…CTNS), 145–167 (TYYP…FTAA), 174–196 (SAWL…YAMV), 219–239 (MIIL…GSRF), 241–261 (LGGW…WEYW), and 275–295 (FLHN…DYAL).

It belongs to the UbiA prenyltransferase family. The cofactor is Mg(2+).

The protein localises to the cell inner membrane. It catalyses the reaction all-trans-octaprenyl diphosphate + 4-hydroxybenzoate = 4-hydroxy-3-(all-trans-octaprenyl)benzoate + diphosphate. It functions in the pathway cofactor biosynthesis; ubiquinone biosynthesis. In terms of biological role, catalyzes the prenylation of para-hydroxybenzoate (PHB) with an all-trans polyprenyl group. Mediates the second step in the final reaction sequence of ubiquinone-8 (UQ-8) biosynthesis, which is the condensation of the polyisoprenoid side chain with PHB, generating the first membrane-bound Q intermediate 3-octaprenyl-4-hydroxybenzoate. The sequence is that of 4-hydroxybenzoate octaprenyltransferase from Pseudomonas putida (strain W619).